Here is a 465-residue protein sequence, read N- to C-terminus: MPKKVQPTGDENEEASVPCKRVKEELPETLSVLNFDSPSSFFESLISPIKVETFFKEFWEQKPLLIQRDDPVLAKYYQSLFSLSDLKRLCKKGVYYGRDVNVCRSISGKKKVLNKDGRAHFLQLRKDFDQKRATIQFHQPQRYKDELWRIQEKLECYFGSLVGSNVYMTPAGSQGLPPHYDDVEVFILQLEGTKHWRLYSPTVPLAHEYSVESEDRIGTPTHDFLLKPGDLLYFPRGTIHQAETPSGLAYSIHLTISTYQNNSWGDCLLDSISGFVFDIAKEDVALRSGMPRRMLLNVETPADVTRKLSGFLRTLADQLEGREELLSSDMKKDFVKHRLPPFFEGNGTETMDPGKQLPRLDNIIRLQFKDHIVLTVGPDKNPFDEAQQKVVYIYHSLKNVRQMHMIGEEEESEIFGLRFPLSHVDALKQIWCGSPIRVKDLKLDTDEEKENLALSLWSESLIQVL.

In terms of domain architecture, JmjC spans 139–271; sequence QPQRYKDELW…NSWGDCLLDS (133 aa). Fe cation is bound by residues H179, D181, and H240. S309 carries the post-translational modification Phosphoserine.

Belongs to the ROX family. MINA53 subfamily. It depends on Fe(2+) as a cofactor. Predominantly expressed in testis. Expressed at high levels in spleen, thymus, and colon, but barely detectable in brain, skeletal muscle, and seminal vesicle (at protein level).

It localises to the nucleus. The protein localises to the nucleolus. It catalyses the reaction L-histidyl-[ribosomal protein uL15] + 2-oxoglutarate + O2 = (3S)-3-hydroxy-L-histidyl-[ribosomal protein uL15] + succinate + CO2. It carries out the reaction L-histidyl-[protein] + 2-oxoglutarate + O2 = (3S)-3-hydroxy-L-histidyl-[protein] + succinate + CO2. In terms of biological role, oxygenase that can act as both a histone lysine demethylase and a ribosomal histidine hydroxylase. Is involved in the demethylation of trimethylated 'Lys-9' on histone H3 (H3K9me3), leading to an increase in ribosomal RNA expression. Also catalyzes the hydroxylation of 60S ribosomal protein L27a on 'His-39'. May play an important role in cell growth and survival. May be involved in ribosome biogenesis, most likely during the assembly process of pre-ribosomal particles. This chain is Ribosomal oxygenase 2, found in Mus musculus (Mouse).